Reading from the N-terminus, the 389-residue chain is AIAAVITFLILFTIFGNALVILAVLTSRSLRAPQNLFLVSLAAADILVATLIIPFSLANELLGYWYFRRTWCEVYLALDVLFCTSSIVHLCAISLDRYWAVTRALEYNTKRTPRRIKCIILTVWLIAAVISLPPLIYKGDQGPQPRGRPQCKLNQEAWYILASSIGSFFAPCLIMILVYLRIYLIAKRSHLRGPRAKGGPGGGGSKQPHPVPAGASASAKLPTVASCLAAAGEANGHSEPTGEKEAETPEDSGTPALPSSWPALPSSGQDQKEGVCGASLEEEAEEEEEEEEEEEEGEEECEPQALPASPASACSPPLQQPQGSRVLATLRGQVLLGRGVATAGAQWWRRRAQLTREKRFTFVLAVVIGVFVLCWFPFFFSYSLGAICP.

The helical transmembrane segment at 1–25 (AIAAVITFLILFTIFGNALVILAVL) threads the bilayer. Over 26–36 (TSRSLRAPQNL) the chain is Cytoplasmic. Residues 37 to 62 (FLVSLAAADILVATLIIPFSLANELL) form a helical membrane-spanning segment. Topologically, residues 63 to 72 (GYWYFRRTWC) are extracellular. The cysteines at positions 72 and 151 are disulfide-linked. Residues 73–95 (EVYLALDVLFCTSSIVHLCAISL) traverse the membrane as a helical segment. Residues 96–117 (DRYWAVTRALEYNTKRTPRRIK) are Cytoplasmic-facing. Residues 118–140 (CIILTVWLIAAVISLPPLIYKGD) traverse the membrane as a helical segment. The Extracellular segment spans residues 141-156 (QGPQPRGRPQCKLNQE). A helical membrane pass occupies residues 157 to 180 (AWYILASSIGSFFAPCLIMILVYL). Residues 181–363 (RIYLIAKRSH…LTREKRFTFV (183 aa)) are Cytoplasmic-facing. 2 disordered regions span residues 194–216 (PRAK…AGAS) and 233–320 (EANG…PLQQ). Over residues 196–205 (AKGGPGGGGS) the composition is skewed to gly residues. Residues 255–267 (PALPSSWPALPSS) are compositionally biased toward low complexity. Residues 280–302 (LEEEAEEEEEEEEEEEEGEEECE) are compositionally biased toward acidic residues. Over residues 303 to 320 (PQALPASPASACSPPLQQ) the composition is skewed to low complexity. The chain crosses the membrane as a helical span at residues 364-387 (LAVVIGVFVLCWFPFFFSYSLGAI). Residues 388–389 (CP) are Extracellular-facing.

It belongs to the G-protein coupled receptor 1 family. Adrenergic receptor subfamily. ADRA2B sub-subfamily. Interacts with RAB26. Interacts with PPP1R9B. Interacts with GGA1, GGA2 and GGA3.

The protein localises to the cell membrane. Alpha-2 adrenergic receptors mediate the catecholamine-induced inhibition of adenylate cyclase through the action of G proteins. This is Alpha-2B adrenergic receptor (ADRA2B) from Equus caballus (Horse).